Consider the following 391-residue polypeptide: Casein kinase II subunit alpha (391 aa).

Residues 36–41 (QDDYQL) are interaction with beta subunit. Residues 39-324 (YQLVRKLGRG…AREAMEHPYF (286 aa)) form the Protein kinase domain. ATP-binding positions include 45–53 (LGRGKYSEV) and K68. D156 serves as the catalytic Proton acceptor. Phosphothreonine; by CDK1 occurs at positions 344 and 360. S362 and S370 each carry phosphoserine; by CDK1.

Belongs to the protein kinase superfamily. Ser/Thr protein kinase family. CK2 subfamily. Heterotetramer composed of two catalytic subunits (alpha chain and/or alpha' chain) and two regulatory subunits (beta chains). The tetramer can exist as a combination of 2 alpha/2 beta, 2 alpha'/2 beta or 1 alpha/1 alpha'/2 beta subunits. Also part of a CK2-SPT16-SSRP1 complex composed of SSRP1, SUPT16H, CSNK2A1, CSNK2A2 and CSNK2B, which forms following UV irradiation. Interacts with RNPS1. Interacts with SNAI1. Interacts with PML. Interacts with CCAR2. Interacts with HIRIP3. Post-translationally, phosphorylated at Thr-344, Thr-360, Ser-362 and Ser-370 by CDK1 in prophase and metaphase and dephosphorylated during anaphase. Phosphorylation does not directly affect casein kinase 2 activity, but may contribute to its regulation by forming binding sites for interacting proteins and/or targeting it to different compartments.

The protein resides in the nucleus. The enzyme catalyses L-seryl-[protein] + ATP = O-phospho-L-seryl-[protein] + ADP + H(+). The catalysed reaction is L-threonyl-[protein] + ATP = O-phospho-L-threonyl-[protein] + ADP + H(+). Its activity is regulated as follows. Constitutively active protein kinase whose activity is not directly affected by phosphorylation. Seems to be regulated by level of expression and localization. Its function is as follows. Catalytic subunit of a constitutively active serine/threonine-protein kinase complex that phosphorylates a large number of substrates containing acidic residues C-terminal to the phosphorylated serine or threonine. Regulates numerous cellular processes, such as cell cycle progression, apoptosis and transcription, as well as viral infection. May act as a regulatory node which integrates and coordinates numerous signals leading to an appropriate cellular response. During mitosis, functions as a component of the p53/TP53-dependent spindle assembly checkpoint (SAC) that maintains cyclin-B-CDK1 activity and G2 arrest in response to spindle damage. Also required for p53/TP53-mediated apoptosis, phosphorylating 'Ser-392' of p53/TP53 following UV irradiation. Phosphorylates a number of DNA repair proteins in response to DNA damage, such as MDC1, MRE11, RAD9A, RAD51 and HTATSF1, promoting their recruitment to DNA damage sites. Can also negatively regulate apoptosis. Phosphorylates the caspases CASP9 and CASP2 and the apoptotic regulator NOL3. Phosphorylation protects CASP9 from cleavage and activation by CASP8, and inhibits the dimerization of CASP2 and activation of CASP8. Phosphorylates YY1, protecting YY1 from cleavage by CASP7 during apoptosis. Regulates transcription by direct phosphorylation of RNA polymerases I, II, III and IV. Also phosphorylates and regulates numerous transcription factors including NF-kappa-B, STAT1, CREB1, IRF1, IRF2, ATF1, ATF4, SRF, MAX, JUN, FOS, MYC and MYB. Phosphorylates Hsp90 and its co-chaperones FKBP4 and CDC37, which is essential for chaperone function. Mediates sequential phosphorylation of FNIP1, promoting its gradual interaction with Hsp90, leading to activate both kinase and non-kinase client proteins of Hsp90. Regulates Wnt signaling by phosphorylating CTNNB1 and the transcription factor LEF1. Acts as an ectokinase that phosphorylates several extracellular proteins. Phosphorylates PML at 'Ser-565' and primes it for ubiquitin-mediated degradation. Plays an important role in the circadian clock function by phosphorylating BMAL1 at 'Ser-90' which is pivotal for its interaction with CLOCK and which controls CLOCK nuclear entry. Phosphorylates FMR1, promoting FMR1-dependent formation of a membraneless compartment. May phosphorylate histone H2A on 'Ser-1'. The polypeptide is Casein kinase II subunit alpha (Csnk2a1) (Mus musculus (Mouse)).